The sequence spans 693 residues: MAREFSLEKTRNIGIMAHVDAGKTTTTERILYYTGKIHKIGETHEGASQMDWMEQEQERGITITSAATTAQWNNHRVNIIDTPGHVDFTIEVQRSLRVLDGAVTVLDSQSGVEPQTETVWRQATEYGVPRIVFANKMDKIGADFLYSVSTLHDRLQANAHPIQLPIGSEDDFRGIIDLIKMKAEIYTNDLGTDILEEDIPAEYLDQAQEYREKLIEAVAETDEELMMKYLEGEEITNEELKAGIRKATINVEFFPVLCGSAFKNKGVQLMLDAVIDYLPSPLDIPAIKGINPDTDAEEIRPASDEEPFAALAFKIMTDPFVGRLTFFRVYSGVLQSGSYVLNTSKGKRERIGRILQMHANSRQEIDTVYSGDIAAAVGLKDTTTGDSLTDEKAKIILESINVPEPVIQLMVEPKSKADQDKMGIALQKLAEEDPTFRVETNVETGETVISGMGELHLDVLVDRMRREFKVEANVGAPQVSYRETFRASTQARGFFKRQSGGKGQFGDVWIEFTPNEEGKGFEFENAIVGGVVPREFIPAVEKGLVESMANGVLAGYPMVDVKAKLYDGSYHDVDSSETAFKIAASLSLKEAAKSAQPAILEPMMLVTITVPEENLGDVMGHVTARRGRVDGMEAHGNSQIVRAYVPLAEMFGYATVLRSASQGRGTFMMVFDHYEDVPKSVQEEIIKKNKGED.

A tr-type G domain is found at 8 to 282 (EKTRNIGIMA…AVIDYLPSPL (275 aa)). GTP is bound by residues 17–24 (AHVDAGKT), 81–85 (DTPGH), and 135–138 (NKMD).

Belongs to the TRAFAC class translation factor GTPase superfamily. Classic translation factor GTPase family. EF-G/EF-2 subfamily.

Its subcellular location is the cytoplasm. Catalyzes the GTP-dependent ribosomal translocation step during translation elongation. During this step, the ribosome changes from the pre-translocational (PRE) to the post-translocational (POST) state as the newly formed A-site-bound peptidyl-tRNA and P-site-bound deacylated tRNA move to the P and E sites, respectively. Catalyzes the coordinated movement of the two tRNA molecules, the mRNA and conformational changes in the ribosome. The protein is Elongation factor G of Streptococcus pneumoniae serotype 2 (strain D39 / NCTC 7466).